Here is a 118-residue protein sequence, read N- to C-terminus: Holo-[acyl-carrier-protein] synthase (118 aa).

2 residues coordinate Mg(2+): D8 and E58.

This sequence belongs to the P-Pant transferase superfamily. AcpS family. The cofactor is Mg(2+).

Its subcellular location is the cytoplasm. The catalysed reaction is apo-[ACP] + CoA = holo-[ACP] + adenosine 3',5'-bisphosphate + H(+). Transfers the 4'-phosphopantetheine moiety from coenzyme A to a Ser of acyl-carrier-protein. In Streptococcus pyogenes serotype M28 (strain MGAS6180), this protein is Holo-[acyl-carrier-protein] synthase.